We begin with the raw amino-acid sequence, 389 residues long: Phospho-N-acetylmuramoyl-pentapeptide-transferase (389 aa).

Transmembrane regions (helical) follow at residues 25-45 (RAVM…PFVI), 74-94 (MGGV…ADWG), 97-117 (FIWI…VDDY), 134-154 (FFWQ…SVSE), 190-210 (ISYP…IVGS), 222-242 (GLVI…AYVM), 259-279 (AGEL…FLWF), 286-306 (VFMG…IAVI), 311-331 (IVLF…MLQV), and 366-386 (QVVV…LSTL).

Belongs to the glycosyltransferase 4 family. MraY subfamily. Mg(2+) serves as cofactor.

The protein localises to the cell inner membrane. The enzyme catalyses UDP-N-acetyl-alpha-D-muramoyl-L-alanyl-gamma-D-glutamyl-meso-2,6-diaminopimeloyl-D-alanyl-D-alanine + di-trans,octa-cis-undecaprenyl phosphate = di-trans,octa-cis-undecaprenyl diphospho-N-acetyl-alpha-D-muramoyl-L-alanyl-D-glutamyl-meso-2,6-diaminopimeloyl-D-alanyl-D-alanine + UMP. It participates in cell wall biogenesis; peptidoglycan biosynthesis. Its function is as follows. Catalyzes the initial step of the lipid cycle reactions in the biosynthesis of the cell wall peptidoglycan: transfers peptidoglycan precursor phospho-MurNAc-pentapeptide from UDP-MurNAc-pentapeptide onto the lipid carrier undecaprenyl phosphate, yielding undecaprenyl-pyrophosphoryl-MurNAc-pentapeptide, known as lipid I. In Ralstonia pickettii (strain 12J), this protein is Phospho-N-acetylmuramoyl-pentapeptide-transferase.